Reading from the N-terminus, the 174-residue chain is Urease accessory protein UreE (174 aa).

The protein belongs to the UreE family.

Its subcellular location is the cytoplasm. Its function is as follows. Involved in urease metallocenter assembly. Binds nickel. Probably functions as a nickel donor during metallocenter assembly. In Helicobacter hepaticus (strain ATCC 51449 / 3B1), this protein is Urease accessory protein UreE.